Reading from the N-terminus, the 265-residue chain is Hydroxyethylthiazole kinase (265 aa).

M50 is a binding site for substrate. Residues R125 and T171 each contribute to the ATP site. Substrate is bound at residue G198.

This sequence belongs to the Thz kinase family. Requires Mg(2+) as cofactor.

The catalysed reaction is 5-(2-hydroxyethyl)-4-methylthiazole + ATP = 4-methyl-5-(2-phosphooxyethyl)-thiazole + ADP + H(+). It functions in the pathway cofactor biosynthesis; thiamine diphosphate biosynthesis; 4-methyl-5-(2-phosphoethyl)-thiazole from 5-(2-hydroxyethyl)-4-methylthiazole: step 1/1. Its function is as follows. Catalyzes the phosphorylation of the hydroxyl group of 4-methyl-5-beta-hydroxyethylthiazole (THZ). The protein is Hydroxyethylthiazole kinase of Salmonella schwarzengrund (strain CVM19633).